The following is a 165-amino-acid chain: Chorismate pyruvate-lyase (165 aa).

Residues M35, R77, L115, and E156 each coordinate substrate.

Belongs to the UbiC family. In terms of assembly, monomer.

The protein resides in the cytoplasm. The catalysed reaction is chorismate = 4-hydroxybenzoate + pyruvate. It functions in the pathway cofactor biosynthesis; ubiquinone biosynthesis. Removes the pyruvyl group from chorismate, with concomitant aromatization of the ring, to provide 4-hydroxybenzoate (4HB) for the ubiquinone pathway. In Salmonella gallinarum (strain 287/91 / NCTC 13346), this protein is Chorismate pyruvate-lyase.